The primary structure comprises 379 residues: RIB43A-like with coiled-coils protein 1 (379 aa).

The interval 1–21 (MYNINQSTDTKEAAAIEARRN) is disordered. Residues 9–21 (DTKEAAAIEARRN) show a composition bias toward basic and acidic residues. Coiled coils occupy residues 85-111 (ADRTRRLAKKVQEFREQKQQLKNGREF), 161-241 (RYNL…KANL), and 280-304 (EQRAAIRKEQEVQRSKKEAHRQAEK).

The protein belongs to the RIB43A family. Microtubule inner protein component of sperm flagellar doublet microtubules.

It is found in the cytoplasm. It localises to the cytoskeleton. The protein resides in the flagellum axoneme. This is RIB43A-like with coiled-coils protein 1 (RIBC1) from Macaca fascicularis (Crab-eating macaque).